The primary structure comprises 344 residues: Methionine import ATP-binding protein MetN (344 aa).

In terms of domain architecture, ABC transporter spans 2–241 (IELQGLSQRF…PQHDVTRAMI (240 aa)). Position 38–45 (38–45 (GRSGAGKS)) interacts with ATP.

Belongs to the ABC transporter superfamily. Methionine importer (TC 3.A.1.24) family. In terms of assembly, the complex is composed of two ATP-binding proteins (MetN), two transmembrane proteins (MetI) and a solute-binding protein (MetQ).

Its subcellular location is the cell inner membrane. The catalysed reaction is L-methionine(out) + ATP + H2O = L-methionine(in) + ADP + phosphate + H(+). It catalyses the reaction D-methionine(out) + ATP + H2O = D-methionine(in) + ADP + phosphate + H(+). Its function is as follows. Part of the ABC transporter complex MetNIQ involved in methionine import. Responsible for energy coupling to the transport system. In Cupriavidus necator (strain ATCC 17699 / DSM 428 / KCTC 22496 / NCIMB 10442 / H16 / Stanier 337) (Ralstonia eutropha), this protein is Methionine import ATP-binding protein MetN.